The sequence spans 85 residues: MKTDIHPKYAPVVFRDLASGATFLTRSTVSSSKTIVWEDGNEYAVIDVEISSESHPFYTGKQRIMDSAGRVEKFNSRYAGFGTKK.

The protein belongs to the bacterial ribosomal protein bL31 family. Type B subfamily. Part of the 50S ribosomal subunit.

The polypeptide is Large ribosomal subunit protein bL31B (Clavibacter sepedonicus (Clavibacter michiganensis subsp. sepedonicus)).